The following is a 394-amino-acid chain: MFELVDNIAQTAVIKVIGVGGGGGNAVNHMAKNNVEGVEFICANTDAQALKNIAARTVLQLGPGVTKGLGAGANPEVGRQAALEDRERISEVLEGADMVFITTGMGGGTGTGAAPIIAEVAKEMGILTVAVVTRPFPFEGRKRMQIADEGIRALAESVDSLITIPNEKLLTILGKDASLLAAFAKADDVLAGAVRGISDIIKRPGMINVDFADVKTVMSEMGMAMMGTGCASGPNRAREATEAAIRNPLLEDVNLQGARGILVNITAGPDLSLGEYSDVGNIIEQFASEHATVKVGTVIDADMRDELHVTVVATGLGARLEKPVKVVDNTVQGSAAQAAAPAQREQQSVNYRDLDRPTVMRNQSHGSAATAAKLNPQDDLDYLDIPAFLRRQAD.

GTP is bound by residues 21–25, 108–110, E139, R143, and D187; these read GGGGN and GTG.

The protein belongs to the FtsZ family. Homodimer. Polymerizes to form a dynamic ring structure in a strictly GTP-dependent manner. Interacts directly with several other division proteins. Interacts with the SulA inhibitor.

It localises to the cytoplasm. Essential cell division protein that forms a contractile ring structure (Z ring) at the future cell division site. The regulation of the ring assembly controls the timing and the location of cell division. One of the functions of the FtsZ ring is to recruit other cell division proteins to the septum to produce a new cell wall between the dividing cells. Binds GTP and shows GTPase activity. The protein is Cell division protein FtsZ of Pseudomonas aeruginosa (strain ATCC 15692 / DSM 22644 / CIP 104116 / JCM 14847 / LMG 12228 / 1C / PRS 101 / PAO1).